The following is a 377-amino-acid chain: Probable G-protein coupled receptor F27E5.8 (377 aa).

Residues 1–34 (MSEQDSSSPKYMRFLLGNFTSAEMVTDGNFLIYC) lie on the Extracellular side of the membrane. N-linked (GlcNAc...) asparagine glycosylation occurs at N18. A helical transmembrane segment spans residues 35–55 (IEMGLLVIGVLENIFMIGAVF). At 56 to 71 (STSCLHLNLRILICNC) the chain is on the cytoplasmic side. The helical transmembrane segment at 72-92 (CLGFILMAVGRAMIAVPLCIA) threads the bilayer. The Extracellular segment spans residues 93–105 (HLRDVDISSHAWC). A helical membrane pass occupies residues 106–126 (FIANAVHHSSADSVCLSFVFI). Residues 127-144 (MLERTAGTIWSKDYEKTK) are Cytoplasmic-facing. The chain crosses the membrane as a helical span at residues 145 to 165 (IHIFPCIFAFLQWFIPMFMIL). The Extracellular portion of the chain corresponds to 166–195 (GNFLDRANRMEHFLLYPHLPCQIEYLTPTM). The helical transmembrane segment at 196–216 (FMITIFIIVIGFIASVGGITI) threads the bilayer. Residues 217–251 (VYNKNIKKYNTRDIWFNTVNLSERYQITENIRSTH) lie on the Cytoplasmic side of the membrane. A helical transmembrane segment spans residues 252-272 (LLFPLLALMLIFSTLSVSVLI). The Extracellular segment spans residues 273–303 (YGGYWVSVMTKEPARFEEVVKWFGRGGEAAQ). Residues 304 to 324 (LFDIITAIYTISFPICAFICH) form a helical membrane-spanning segment. The Cytoplasmic segment spans residues 325 to 377 (PNLFRFLRKFIGWNSYAVRPSNLNEIGGFEMSTAPIRTQTEFHFQELSRQWNT).

The protein belongs to the G-protein coupled receptor 1 family.

The protein resides in the cell membrane. This is Probable G-protein coupled receptor F27E5.8 from Caenorhabditis elegans.